Reading from the N-terminus, the 506-residue chain is Glutamate--tRNA ligase (506 aa).

The short motif at 29–39 (PSPTGTPHVGL) is the 'HIGH' region element. The 'KMSKS' region signature appears at 273 to 277 (KLSKR). Lys276 lines the ATP pocket.

This sequence belongs to the class-I aminoacyl-tRNA synthetase family. Glutamate--tRNA ligase type 1 subfamily. Monomer.

It is found in the cytoplasm. It catalyses the reaction tRNA(Glu) + L-glutamate + ATP = L-glutamyl-tRNA(Glu) + AMP + diphosphate. Functionally, catalyzes the attachment of glutamate to tRNA(Glu) in a two-step reaction: glutamate is first activated by ATP to form Glu-AMP and then transferred to the acceptor end of tRNA(Glu). In Paenarthrobacter aurescens (strain TC1), this protein is Glutamate--tRNA ligase.